The primary structure comprises 615 residues: Vitamin B12 transporter BtuB (615 aa).

The N-terminal stretch at M1–A20 is a signal peptide. The TonB box motif lies at N26–N33. Positions P38–T152 constitute a TBDR plug domain. Cyanocob(III)alamin contacts are provided by residues S85, N92, and I110–S111. The region spanning K155–F615 is the TBDR beta-barrel domain. Beta stranded transmembrane passes span T158 to G165, Y169 to Q178, and T184 to T195. D199, Q210, D212, and D214 together coordinate Ca(2+). 2 consecutive transmembrane segments (beta stranded) span residues F216 to E226 and D231 to D247. Ca(2+) contacts are provided by Y248, D249, and D255. Transmembrane regions (beta stranded) follow at residues R257–Q271, G273–D290, T303–Q319, A322–W331, E347–A363, I365–D375, F379–I394, Y397–N411, E429–E438, V444–N453, V468–F486, P490–A505, R513–W525, and D531–D546. Cyanocob(III)alamin is bound at residue T303. Cyanocob(III)alamin is bound at residue R513. Residue Y547 participates in cyanocob(III)alamin binding. 3 consecutive transmembrane segments (beta stranded) span residues T559–S573, I586–A597, and A603–F615. The TonB C-terminal box signature appears at Y598 to F615.

This sequence belongs to the TonB-dependent receptor family. BtuB (TC 1.B.14.3.1) subfamily.

It is found in the cell outer membrane. In terms of biological role, involved in the active translocation of vitamin B12 (cyanocobalamin) across the outer membrane to the periplasmic space. It derives its energy for transport by interacting with the trans-periplasmic membrane protein TonB. In Pectobacterium atrosepticum (strain SCRI 1043 / ATCC BAA-672) (Erwinia carotovora subsp. atroseptica), this protein is Vitamin B12 transporter BtuB.